A 1193-amino-acid chain; its full sequence is DNA-directed RNA polymerase subunit beta (1193 aa).

Acidic residues predominate over residues 1153–1162 (EMRDLEDDED). Residues 1153-1193 (EMRDLEDDEDAKQNEGLSLPNDEESEELVSADAERDVVTKE) form a disordered region. A compositionally biased stretch (basic and acidic residues) spans 1184 to 1193 (DAERDVVTKE).

It belongs to the RNA polymerase beta chain family. The RNAP catalytic core consists of 2 alpha, 1 beta, 1 beta' and 1 omega subunit. When a sigma factor is associated with the core the holoenzyme is formed, which can initiate transcription.

It carries out the reaction RNA(n) + a ribonucleoside 5'-triphosphate = RNA(n+1) + diphosphate. In terms of biological role, DNA-dependent RNA polymerase catalyzes the transcription of DNA into RNA using the four ribonucleoside triphosphates as substrates. The chain is DNA-directed RNA polymerase subunit beta from Bacillus licheniformis (strain ATCC 14580 / DSM 13 / JCM 2505 / CCUG 7422 / NBRC 12200 / NCIMB 9375 / NCTC 10341 / NRRL NRS-1264 / Gibson 46).